Here is a 206-residue protein sequence, read N- to C-terminus: BAG family molecular chaperone regulator 1B (206 aa).

In terms of domain architecture, BAG spans 122 to 202; the sequence is IEAYIDELQQ…QYLSKLDSTK (81 aa). Position 144 is a phosphoserine (Ser144).

Binds to the ATPase domain of HSP70/HSC chaperones.

Its function is as follows. Inhibits the chaperone activity of HSP70/HSC70 by promoting substrate release. The polypeptide is BAG family molecular chaperone regulator 1B (bag102) (Schizosaccharomyces pombe (strain 972 / ATCC 24843) (Fission yeast)).